Consider the following 238-residue polypeptide: Ribonuclease PH (238 aa).

Phosphate-binding positions include Arg86 and 124 to 126; that span reads GTR.

This sequence belongs to the RNase PH family. Homohexameric ring arranged as a trimer of dimers.

The enzyme catalyses tRNA(n+1) + phosphate = tRNA(n) + a ribonucleoside 5'-diphosphate. Its function is as follows. Phosphorolytic 3'-5' exoribonuclease that plays an important role in tRNA 3'-end maturation. Removes nucleotide residues following the 3'-CCA terminus of tRNAs; can also add nucleotides to the ends of RNA molecules by using nucleoside diphosphates as substrates, but this may not be physiologically important. Probably plays a role in initiation of 16S rRNA degradation (leading to ribosome degradation) during starvation. The chain is Ribonuclease PH from Halorhodospira halophila (strain DSM 244 / SL1) (Ectothiorhodospira halophila (strain DSM 244 / SL1)).